The primary structure comprises 289 residues: Phosphatidylserine decarboxylase proenzyme (289 aa).

Catalysis depends on charge relay system; for autoendoproteolytic cleavage activity residues Asp-89, His-146, and Ser-252. Residue Ser-252 is the Schiff-base intermediate with substrate; via pyruvic acid; for decarboxylase activity of the active site. Ser-252 carries the post-translational modification Pyruvic acid (Ser); by autocatalysis.

Belongs to the phosphatidylserine decarboxylase family. PSD-B subfamily. Prokaryotic type I sub-subfamily. Heterodimer of a large membrane-associated beta subunit and a small pyruvoyl-containing alpha subunit. Pyruvate serves as cofactor. Is synthesized initially as an inactive proenzyme. Formation of the active enzyme involves a self-maturation process in which the active site pyruvoyl group is generated from an internal serine residue via an autocatalytic post-translational modification. Two non-identical subunits are generated from the proenzyme in this reaction, and the pyruvate is formed at the N-terminus of the alpha chain, which is derived from the carboxyl end of the proenzyme. The autoendoproteolytic cleavage occurs by a canonical serine protease mechanism, in which the side chain hydroxyl group of the serine supplies its oxygen atom to form the C-terminus of the beta chain, while the remainder of the serine residue undergoes an oxidative deamination to produce ammonia and the pyruvoyl prosthetic group on the alpha chain. During this reaction, the Ser that is part of the protease active site of the proenzyme becomes the pyruvoyl prosthetic group, which constitutes an essential element of the active site of the mature decarboxylase.

Its subcellular location is the cell membrane. It carries out the reaction a 1,2-diacyl-sn-glycero-3-phospho-L-serine + H(+) = a 1,2-diacyl-sn-glycero-3-phosphoethanolamine + CO2. It functions in the pathway phospholipid metabolism; phosphatidylethanolamine biosynthesis; phosphatidylethanolamine from CDP-diacylglycerol: step 2/2. Its function is as follows. Catalyzes the formation of phosphatidylethanolamine (PtdEtn) from phosphatidylserine (PtdSer). In Nitrosospira multiformis (strain ATCC 25196 / NCIMB 11849 / C 71), this protein is Phosphatidylserine decarboxylase proenzyme.